A 408-amino-acid polypeptide reads, in one-letter code: uncharacterized protein (408 aa).

This is an uncharacterized protein from Methanocaldococcus jannaschii (strain ATCC 43067 / DSM 2661 / JAL-1 / JCM 10045 / NBRC 100440) (Methanococcus jannaschii).